The following is a 368-amino-acid chain: 3-dehydroquinate synthase (368 aa).

NAD(+) contacts are provided by residues 69–74 (DGEAYK), 103–107 (GVIGD), 127–128 (TT), Lys140, and Lys149. Positions 182, 245, and 262 each coordinate Zn(2+).

The protein belongs to the sugar phosphate cyclases superfamily. Dehydroquinate synthase family. Co(2+) serves as cofactor. It depends on Zn(2+) as a cofactor. NAD(+) is required as a cofactor.

The protein localises to the cytoplasm. It carries out the reaction 7-phospho-2-dehydro-3-deoxy-D-arabino-heptonate = 3-dehydroquinate + phosphate. It participates in metabolic intermediate biosynthesis; chorismate biosynthesis; chorismate from D-erythrose 4-phosphate and phosphoenolpyruvate: step 2/7. Its function is as follows. Catalyzes the conversion of 3-deoxy-D-arabino-heptulosonate 7-phosphate (DAHP) to dehydroquinate (DHQ). The sequence is that of 3-dehydroquinate synthase from Pseudomonas aeruginosa (strain LESB58).